A 94-amino-acid chain; its full sequence is Co-chaperonin GroES (94 aa).

The protein belongs to the GroES chaperonin family. In terms of assembly, heptamer of 7 subunits arranged in a ring. Interacts with the chaperonin GroEL.

The protein resides in the cytoplasm. In terms of biological role, together with the chaperonin GroEL, plays an essential role in assisting protein folding. The GroEL-GroES system forms a nano-cage that allows encapsulation of the non-native substrate proteins and provides a physical environment optimized to promote and accelerate protein folding. GroES binds to the apical surface of the GroEL ring, thereby capping the opening of the GroEL channel. The polypeptide is Co-chaperonin GroES (Bacillus subtilis (strain 168)).